A 65-amino-acid polypeptide reads, in one-letter code: Muscarinic m1-toxin2 (65 aa).

Disulfide bonds link cysteine 3–cysteine 24, cysteine 17–cysteine 42, cysteine 46–cysteine 57, and cysteine 58–cysteine 63.

It belongs to the three-finger toxin family. Short-chain subfamily. Aminergic toxin sub-subfamily. As to quaternary structure, monomer. In terms of tissue distribution, expressed by the venom gland.

The protein resides in the secreted. In terms of biological role, binds irreversibly and specifically to M1 (CHRM1) muscarinic acetylcholine receptors, blocking further binding of antagonists and preventing the action of agonists. The chain is Muscarinic m1-toxin2 from Dendroaspis angusticeps (Eastern green mamba).